Here is a 531-residue protein sequence, read N- to C-terminus: Peptide chain release factor 3 (531 aa).

Positions 11-280 (GRRRTFAIIS…AFIRFASRPG (270 aa)) constitute a tr-type G domain. GTP is bound by residues 20–27 (SHPDAGKT), 88–92 (DTPGH), and 142–145 (NKLD).

The protein belongs to the TRAFAC class translation factor GTPase superfamily. Classic translation factor GTPase family. PrfC subfamily.

It localises to the cytoplasm. Its function is as follows. Increases the formation of ribosomal termination complexes and stimulates activities of RF-1 and RF-2. It binds guanine nucleotides and has strong preference for UGA stop codons. It may interact directly with the ribosome. The stimulation of RF-1 and RF-2 is significantly reduced by GTP and GDP, but not by GMP. This chain is Peptide chain release factor 3, found in Gloeobacter violaceus (strain ATCC 29082 / PCC 7421).